Consider the following 219-residue polypeptide: Elongation factor Ts (219 aa).

Residues threonine 82 to valine 85 form an involved in Mg(2+) ion dislocation from EF-Tu region.

This sequence belongs to the EF-Ts family.

It is found in the cytoplasm. In terms of biological role, associates with the EF-Tu.GDP complex and induces the exchange of GDP to GTP. It remains bound to the aminoacyl-tRNA.EF-Tu.GTP complex up to the GTP hydrolysis stage on the ribosome. The sequence is that of Elongation factor Ts from Anaeromyxobacter sp. (strain Fw109-5).